A 933-amino-acid chain; its full sequence is Isoleucine--tRNA ligase (933 aa).

The 'HIGH' region signature appears at 57–67 (PYANGNIHVGH). Position 554 (E554) interacts with L-isoleucyl-5'-AMP. Residues 595–599 (KMSKS) carry the 'KMSKS' region motif. Residue K598 participates in ATP binding.

It belongs to the class-I aminoacyl-tRNA synthetase family. IleS type 1 subfamily. In terms of assembly, monomer.

The protein resides in the cytoplasm. It carries out the reaction tRNA(Ile) + L-isoleucine + ATP = L-isoleucyl-tRNA(Ile) + AMP + diphosphate. Catalyzes the attachment of isoleucine to tRNA(Ile). As IleRS can inadvertently accommodate and process structurally similar amino acids such as valine, to avoid such errors it has two additional distinct tRNA(Ile)-dependent editing activities. One activity is designated as 'pretransfer' editing and involves the hydrolysis of activated Val-AMP. The other activity is designated 'posttransfer' editing and involves deacylation of mischarged Val-tRNA(Ile). The protein is Isoleucine--tRNA ligase of Streptococcus pyogenes serotype M3 (strain ATCC BAA-595 / MGAS315).